Reading from the N-terminus, the 383-residue chain is Acetylornithine deacetylase (383 aa).

His80 is a binding site for Zn(2+). The active site involves Asp82. Asp112 is a Zn(2+) binding site. Glu144 is an active-site residue. Residues Glu145, Glu169, and His355 each contribute to the Zn(2+) site.

Belongs to the peptidase M20A family. ArgE subfamily. As to quaternary structure, homodimer. Requires Zn(2+) as cofactor. Co(2+) serves as cofactor. The cofactor is glutathione.

Its subcellular location is the cytoplasm. It carries out the reaction N(2)-acetyl-L-ornithine + H2O = L-ornithine + acetate. Its pathway is amino-acid biosynthesis; L-arginine biosynthesis; L-ornithine from N(2)-acetyl-L-ornithine (linear): step 1/1. Catalyzes the hydrolysis of the amide bond of N(2)-acetylated L-amino acids. Cleaves the acetyl group from N-acetyl-L-ornithine to form L-ornithine, an intermediate in L-arginine biosynthesis pathway, and a branchpoint in the synthesis of polyamines. The protein is Acetylornithine deacetylase of Shigella flexneri serotype 5b (strain 8401).